Here is a 201-residue protein sequence, read N- to C-terminus: Small ribosomal subunit protein uS5 (201 aa).

Residues 1 to 28 form a disordered region; sequence MAGPQRRGSGAGGGERRDRKGRDGGASA. Residues 14–23 show a composition bias toward basic and acidic residues; that stretch reads GERRDRKGRD. The S5 DRBM domain occupies 34–97; that stretch reads YVERVVAINR…EEAKKNFFKV (64 aa).

This sequence belongs to the universal ribosomal protein uS5 family. Part of the 30S ribosomal subunit. Contacts proteins S4 and S8.

Functionally, with S4 and S12 plays an important role in translational accuracy. In terms of biological role, located at the back of the 30S subunit body where it stabilizes the conformation of the head with respect to the body. This is Small ribosomal subunit protein uS5 from Streptomyces griseus subsp. griseus (strain JCM 4626 / CBS 651.72 / NBRC 13350 / KCC S-0626 / ISP 5235).